The primary structure comprises 212 residues: Cyclin-dependent kinase inhibitor 3 (212 aa).

The span at 1–12 shows a compositional bias: polar residues; it reads MKPPSSIQTSEF. The segment at 1-20 is disordered; sequence MKPPSSIQTSEFDSSDEEPI. The tract at residues 1 to 34 is interaction with CDK2; it reads MKPPSSIQTSEFDSSDEEPIEDEQTPIHISWLSL. In terms of domain architecture, Tyrosine-protein phosphatase spans 33–201; the sequence is SLSRVNCSQF…FRDKLAAHLS (169 aa). Catalysis depends on Cys-140, which acts as the Phosphocysteine intermediate.

This sequence belongs to the protein-tyrosine phosphatase family. As to quaternary structure, interacts with cyclin-dependent kinases such as CDK1, CDK2 and CDK3. Does not interact with CDK4. Interacts (via C-terminus) with phosphorylated CDK2 (via C-terminal helix). Interacts with MS4A3 (via C-terminus); the interaction enhances CDKN3 enzymatic activity.

It localises to the cytoplasm. The protein localises to the perinuclear region. It catalyses the reaction O-phospho-L-tyrosyl-[protein] + H2O = L-tyrosyl-[protein] + phosphate. The catalysed reaction is O-phospho-L-threonyl-[protein] + H2O = L-threonyl-[protein] + phosphate. It carries out the reaction O-phospho-L-seryl-[protein] + H2O = L-seryl-[protein] + phosphate. Its function is as follows. May play a role in cell cycle regulation. Dual specificity CC phosphatase active toward substrates containing either phosphotyrosine or phosphoserine residues. Dephosphorylates CDK2 at 'Thr-160' in a cyclin-dependent manner. The polypeptide is Cyclin-dependent kinase inhibitor 3 (Homo sapiens (Human)).